The following is a 462-amino-acid chain: Putative ABC transporter A445L (462 aa).

The protein belongs to the protein kinase superfamily. ADCK protein kinase family.

This chain is Putative ABC transporter A445L, found in Chlorella (PBCV-1).